Reading from the N-terminus, the 401-residue chain is Anhydro-N-acetylmuramic acid kinase (401 aa).

25–32 lines the ATP pocket; sequence GTSLDGLD.

It belongs to the anhydro-N-acetylmuramic acid kinase family.

The enzyme catalyses 1,6-anhydro-N-acetyl-beta-muramate + ATP + H2O = N-acetyl-D-muramate 6-phosphate + ADP + H(+). The protein operates within amino-sugar metabolism; 1,6-anhydro-N-acetylmuramate degradation. Its pathway is cell wall biogenesis; peptidoglycan recycling. Catalyzes the specific phosphorylation of 1,6-anhydro-N-acetylmuramic acid (anhMurNAc) with the simultaneous cleavage of the 1,6-anhydro ring, generating MurNAc-6-P. Is required for the utilization of anhMurNAc either imported from the medium or derived from its own cell wall murein, and thus plays a role in cell wall recycling. The polypeptide is Anhydro-N-acetylmuramic acid kinase (Pseudoalteromonas atlantica (strain T6c / ATCC BAA-1087)).